The primary structure comprises 272 residues: Petrobactin import ATP-binding protein FpuC (272 aa).

The 237-residue stretch at Ile2–Glu238 folds into the ABC transporter domain. Gly34–Ser41 lines the ATP pocket.

Belongs to the ABC transporter superfamily. As to quaternary structure, the complex is composed of two ATP-binding proteins (FpuC), two transmembrane proteins (FpuB) and a solute-binding protein (FpuA).

The protein localises to the cell membrane. The catalysed reaction is a Fe(III)-siderophore(out) + ATP + H2O = a Fe(III)-siderophore(in) + ADP + phosphate + H(+). Part of an ABC transporter complex involved in ferric-petrobactin uptake. Probably responsible for energy coupling to the transport system. This is Petrobactin import ATP-binding protein FpuC from Bacillus anthracis.